A 1044-amino-acid polypeptide reads, in one-letter code: Multiple epidermal growth factor-like domains protein 11 (1044 aa).

Residues 1-19 (MVLSLTGLIAFSFLQATLA) form the signal peptide. Over 20–848 (LNPEDPNVCS…SPALGAERHS (829 aa)) the chain is Extracellular. Positions 24 to 101 (DPNVCSHWES…YYESGDFCIP (78 aa)) constitute an EMI domain. 14 disulfide bridges follow: cysteine 28–cysteine 89, cysteine 54–cysteine 63, cysteine 88–cysteine 99, cysteine 103–cysteine 118, cysteine 120–cysteine 129, cysteine 146–cysteine 154, cysteine 148–cysteine 161, cysteine 163–cysteine 172, cysteine 185–cysteine 197, cysteine 191–cysteine 204, cysteine 206–cysteine 215, cysteine 228–cysteine 240, cysteine 234–cysteine 247, and cysteine 249–cysteine 258. EGF-like domains are found at residues 95–130 (SGDF…PDCS), 143–173 (SNRC…WRCE), 181–216 (HGKG…VYCE), 224–259 (HGAH…AVCA), 267–302 (FGQN…DRCQ), 310–345 (FGFQ…PRCQ), 399–434 (YGDG…EVCA), 442–477 (YGPN…LDCT), and 490–520 (NESC…DTCE). An N-linked (GlcNAc...) asparagine glycan is attached at asparagine 270. 15 disulfide bridges follow: cysteine 271/cysteine 283, cysteine 277/cysteine 290, cysteine 292/cysteine 301, cysteine 314/cysteine 326, cysteine 320/cysteine 333, cysteine 335/cysteine 344, cysteine 403/cysteine 415, cysteine 409/cysteine 422, cysteine 424/cysteine 433, cysteine 446/cysteine 458, cysteine 452/cysteine 465, cysteine 467/cysteine 476, cysteine 493/cysteine 501, cysteine 495/cysteine 508, and cysteine 510/cysteine 519. N-linked (GlcNAc...) asparagine glycosylation occurs at asparagine 531. 5 EGF-like domains span residues 571-606 (WGPN…PLCQ), 659-694 (FGQD…KDCS), 707-737 (FHAC…LFCT), 750-780 (GRVC…QHCE), and 788-823 (FGYG…IRCD). 15 disulfides stabilise this stretch: cysteine 575/cysteine 587, cysteine 581/cysteine 594, cysteine 596/cysteine 605, cysteine 663/cysteine 675, cysteine 669/cysteine 682, cysteine 684/cysteine 693, cysteine 710/cysteine 718, cysteine 712/cysteine 725, cysteine 727/cysteine 736, cysteine 753/cysteine 761, cysteine 755/cysteine 768, cysteine 770/cysteine 779, cysteine 792/cysteine 804, cysteine 798/cysteine 811, and cysteine 813/cysteine 822. A helical transmembrane segment spans residues 849-869 (VGAVTGIMLLLFLIVVLLGLF). Residues 870–1044 (AWHRRRQKEK…ANGPSQDKQS (175 aa)) lie on the Cytoplasmic side of the membrane. The segment at 1023–1044 (GHYDLLPVRQSPANGPSQDKQS) is disordered. Residues 1033-1044 (SPANGPSQDKQS) show a composition bias toward polar residues.

This sequence belongs to the MEGF family. In terms of assembly, homomer. Does not interact with MEGF10.

The protein resides in the cell membrane. It localises to the basolateral cell membrane. May regulate the mosaic spacing of specific neuron subtypes in the retina through homotypic retinal neuron repulsion. Mosaics provide a mechanism to distribute each cell type evenly across the retina, ensuring that all parts of the visual field have access to a full set of processing elements. The chain is Multiple epidermal growth factor-like domains protein 11 (MEGF11) from Homo sapiens (Human).